The primary structure comprises 244 residues: Small ribosomal subunit protein uS2 (244 aa).

This sequence belongs to the universal ribosomal protein uS2 family.

The sequence is that of Small ribosomal subunit protein uS2 from Endomicrobium trichonymphae.